Reading from the N-terminus, the 367-residue chain is tRNA-specific 2-thiouridylase MnmA (367 aa).

Residues 11 to 18 (GLSGGVDS) and M37 contribute to the ATP site. An interaction with target base in tRNA region spans residues 109 to 111 (NPD). C114 serves as the catalytic Nucleophile. The cysteines at positions 114 and 211 are disulfide-linked. G139 serves as a coordination point for ATP. Positions 161 to 163 (KDQ) are interaction with tRNA. C211 (cysteine persulfide intermediate) is an active-site residue.

Belongs to the MnmA/TRMU family.

The protein localises to the cytoplasm. The catalysed reaction is S-sulfanyl-L-cysteinyl-[protein] + uridine(34) in tRNA + AH2 + ATP = 2-thiouridine(34) in tRNA + L-cysteinyl-[protein] + A + AMP + diphosphate + H(+). Functionally, catalyzes the 2-thiolation of uridine at the wobble position (U34) of tRNA, leading to the formation of s(2)U34. The chain is tRNA-specific 2-thiouridylase MnmA from Mycoplasma genitalium (strain ATCC 33530 / DSM 19775 / NCTC 10195 / G37) (Mycoplasmoides genitalium).